The following is a 399-amino-acid chain: Acetate kinase 2 (399 aa).

Residue Asn10 participates in Mg(2+) binding. Residue Lys17 coordinates ATP. Arg89 serves as a coordination point for substrate. Asp146 functions as the Proton donor/acceptor in the catalytic mechanism. ATP contacts are provided by residues 206 to 210 (HLGNG), 281 to 283 (DCR), and 329 to 333 (GIGEN). Glu384 is a Mg(2+) binding site.

The protein belongs to the acetokinase family. As to quaternary structure, homodimer. Mg(2+) serves as cofactor. Mn(2+) is required as a cofactor.

Its subcellular location is the cytoplasm. It carries out the reaction acetate + ATP = acetyl phosphate + ADP. It participates in metabolic intermediate biosynthesis; acetyl-CoA biosynthesis; acetyl-CoA from acetate: step 1/2. Its function is as follows. Catalyzes the formation of acetyl phosphate from acetate and ATP. Can also catalyze the reverse reaction. The polypeptide is Acetate kinase 2 (Neisseria meningitidis serogroup B (strain ATCC BAA-335 / MC58)).